Here is a 691-residue protein sequence, read N- to C-terminus: Two-component response regulator ORR21 (691 aa).

Residues 17-132 (KVLVVDDDPT…ELKNIWQHVI (116 aa)) form the Response regulatory domain. 4-aspartylphosphate is present on aspartate 68. Positions 139–155 (NKEHEHSGSLDDTDRTR) are enriched in basic and acidic residues. The interval 139–204 (NKEHEHSGSL…DPSSTSKKPR (66 aa)) is disordered. Residues 199–258 (TSKKPRVVWSVELHQQFVNAVNHLGIDKAVPKKILELMNVPGLTRENVASHLQKFRLYLK) constitute a DNA-binding region (myb-like GARP).

Belongs to the ARR family. Type-B subfamily. Two-component system major event consists of a His-to-Asp phosphorelay between a sensor histidine kinase (HK) and a response regulator (RR). In plants, the His-to-Asp phosphorelay involves an additional intermediate named Histidine-containing phosphotransfer protein (HPt). This multistep phosphorelay consists of a His-Asp-His-Asp sequential transfer of a phosphate group between first a His and an Asp of the HK protein, followed by the transfer to a conserved His of the HPt protein and finally the transfer to an Asp in the receiver domain of the RR protein.

The protein localises to the nucleus. Functionally, transcriptional activator that binds specific DNA sequence. Functions as a response regulator involved in His-to-Asp phosphorelay signal transduction system. Phosphorylation of the Asp residue in the receiver domain activates the ability of the protein to promote the transcription of target genes. May directly activate some type-A response regulators in response to cytokinins. This chain is Two-component response regulator ORR21, found in Oryza sativa subsp. japonica (Rice).